Reading from the N-terminus, the 364-residue chain is Probable tartrate dehydrogenase/decarboxylase TtuC (364 aa).

The Mn(2+) site is built by Asp-222, Asp-246, and Asp-250.

Belongs to the isocitrate and isopropylmalate dehydrogenases family. It depends on Mg(2+) as a cofactor. The cofactor is Mn(2+). Requires K(+) as cofactor.

The protein localises to the cytoplasm. It carries out the reaction tartrate + NAD(+) = 2-hydroxy-3-oxosuccinate + NADH + H(+). The catalysed reaction is (2R,3S)-tartrate + NAD(+) = 2-hydroxy-3-oxosuccinate + NADH + H(+). The enzyme catalyses (2R,3R)-tartrate + NAD(+) = 2-hydroxy-3-oxosuccinate + NADH + H(+). It catalyses the reaction (2R,3R)-tartrate + H(+) = (R)-glycerate + CO2. It carries out the reaction (R)-malate + NAD(+) = pyruvate + CO2 + NADH. It functions in the pathway carbohydrate acid metabolism; tartrate degradation; 2-hydroxy-3-oxosuccinate from L-tartrate: step 1/1. Its pathway is carbohydrate acid metabolism; tartrate degradation; 2-hydroxy-3-oxosuccinate from meso-tartrate: step 1/1. It participates in carbohydrate acid metabolism; tartrate degradation; D-glycerate from L-tartrate: step 1/1. Has multiple catalytic activities. Apart from catalyzing the oxidation of (+)-tartrate to oxaloglycolate, also converts meso-tartrate to D-glycerate and catalyzes the oxidative decarboxylation of D-malate to pyruvate. This chain is Probable tartrate dehydrogenase/decarboxylase TtuC (ttuC), found in Agrobacterium vitis (Rhizobium vitis).